The sequence spans 1268 residues: Neurocan core protein (1268 aa).

The N-terminal stretch at 1-22 is a signal peptide; it reads MGAGSVWASGLLLLWLLLLVAG. Positions 37 to 157 constitute an Ig-like V-type domain; it reads RMLKSGSGPV…EQDLVTLEVT (121 aa). Intrachain disulfides connect Cys58–Cys139, Cys181–Cys252, Cys205–Cys226, Cys279–Cys354, and Cys303–Cys324. Asn121 carries N-linked (GlcNAc...) asparagine glycosylation. Link domains follow at residues 159–254 and 258–356; these read VVFH…YCFA and GGEV…YCFR. N-linked (GlcNAc...) asparagine glycosylation is present at Asn339. Disordered regions lie at residues 363–391, 406–442, 472–540, and 574–630; these read QHGD…ELKP, PLMS…SWPS, PLGT…DQSH, and ISPS…LQAS. Ser380 and Ser410 each carry an O-linked (Xyl...) (chondroitin sulfate) serine glycan. Over residues 419 to 430 the composition is skewed to polar residues; the sequence is TWTQAPEETLGS. The span at 575–585 shows a compositional bias: low complexity; it reads SPSVPSTESTP. A compositionally biased stretch (pro residues) spans 608-617; the sequence is PSEPPAPSPG. Residues 618–630 are compositionally biased toward low complexity; the sequence is PSEALSAVSLQAS. The N-linked (GlcNAc...) asparagine glycan is linked to Asn742. The EGF-like 1 domain maps to 960 to 996; the sequence is PTDPCENNPCLHGGTCHTNGTVYGCSCDQGYAGENCE. Intrachain disulfides connect Cys964-Cys975, Cys969-Cys984, Cys986-Cys995, Cys1002-Cys1013, Cys1007-Cys1022, Cys1024-Cys1033, Cys1040-Cys1051, Cys1068-Cys1160, Cys1136-Cys1152, Cys1167-Cys1210, and Cys1196-Cys1223. An N-linked (GlcNAc...) asparagine glycan is attached at Asn978. The EGF-like 2; calcium-binding domain maps to 998 to 1034; that stretch reads DIDDCLCSPCENGGTCIDEVNGFICLCLPSYGGSLCE. The 130-residue stretch at 1036–1165 folds into the C-type lectin domain; it reads DTEGCDRGWH…LPYVCKKGTV (130 aa). Positions 1165–1225 constitute a Sushi domain; it reads VLCGPPPAVE…WDRPQIMCIK (61 aa). The N-linked (GlcNAc...) asparagine glycan is linked to Asn1175. Positions 1228–1255 are enriched in basic residues; it reads RSHRMRRHHHHPHRHHKPRKEHRKHKRH. Residues 1228–1268 form a disordered region; that stretch reads RSHRMRRHHHHPHRHHKPRKEHRKHKRHPAEDWEKDEGDFC.

Belongs to the aggrecan/versican proteoglycan family. O-glycosylated; contains chondroitin sulfate. Brain.

The protein resides in the secreted. Its function is as follows. May modulate neuronal adhesion and neurite growth during development by binding to neural cell adhesion molecules (NG-CAM and N-CAM). Chondroitin sulfate proteoglycan; binds to hyaluronic acid. This is Neurocan core protein (Ncan) from Mus musculus (Mouse).